The sequence spans 80 residues: Pigment-dispersing hormone peptides (80 aa).

Residues 1 to 20 (MANYITIAIIVGIVCGQALS) form the signal peptide. A propeptide spanning residues 21-58 (VEDVDRNLLELNLPYGRGLDSELQLARLMLAAPRFCHP) is cleaved from the precursor. Alanine amide is present on A78.

This sequence belongs to the arthropod PDH family. In terms of tissue distribution, expressed in the brain (at protein level).

Its subcellular location is the secreted. Neuropeptide PDF is the main transmitter regulating circadian locomotor rhythms. The protein is Pigment-dispersing hormone peptides of Camponotus floridanus (Florida carpenter ant).